The following is a 459-amino-acid chain: Bifunctional protein GlmU (459 aa).

The interval 1–230 (MSNRFAVILA…FDETLGVNDR (230 aa)) is pyrophosphorylase. UDP-N-acetyl-alpha-D-glucosamine-binding positions include 9-12 (LAAG), K23, Q73, and 78-79 (GT). Mg(2+) is bound at residue D103. Residues G140, E155, N170, and N228 each coordinate UDP-N-acetyl-alpha-D-glucosamine. N228 lines the Mg(2+) pocket. The interval 231–251 (VALSQAEIIMKNRINRKNMVN) is linker. Residues 252-459 (GVTIIDPSNT…VDQLLNKKKS (208 aa)) form an N-acetyltransferase region. 2 residues coordinate UDP-N-acetyl-alpha-D-glucosamine: R333 and K351. The Proton acceptor role is filled by H363. Residues Y366 and N377 each contribute to the UDP-N-acetyl-alpha-D-glucosamine site. Residues 386–387 (NY), A423, and R440 contribute to the acetyl-CoA site.

The protein in the N-terminal section; belongs to the N-acetylglucosamine-1-phosphate uridyltransferase family. This sequence in the C-terminal section; belongs to the transferase hexapeptide repeat family. In terms of assembly, homotrimer. Mg(2+) is required as a cofactor.

Its subcellular location is the cytoplasm. It carries out the reaction alpha-D-glucosamine 1-phosphate + acetyl-CoA = N-acetyl-alpha-D-glucosamine 1-phosphate + CoA + H(+). The enzyme catalyses N-acetyl-alpha-D-glucosamine 1-phosphate + UTP + H(+) = UDP-N-acetyl-alpha-D-glucosamine + diphosphate. Its pathway is nucleotide-sugar biosynthesis; UDP-N-acetyl-alpha-D-glucosamine biosynthesis; N-acetyl-alpha-D-glucosamine 1-phosphate from alpha-D-glucosamine 6-phosphate (route II): step 2/2. It functions in the pathway nucleotide-sugar biosynthesis; UDP-N-acetyl-alpha-D-glucosamine biosynthesis; UDP-N-acetyl-alpha-D-glucosamine from N-acetyl-alpha-D-glucosamine 1-phosphate: step 1/1. It participates in bacterial outer membrane biogenesis; LPS lipid A biosynthesis. Functionally, catalyzes the last two sequential reactions in the de novo biosynthetic pathway for UDP-N-acetylglucosamine (UDP-GlcNAc). The C-terminal domain catalyzes the transfer of acetyl group from acetyl coenzyme A to glucosamine-1-phosphate (GlcN-1-P) to produce N-acetylglucosamine-1-phosphate (GlcNAc-1-P), which is converted into UDP-GlcNAc by the transfer of uridine 5-monophosphate (from uridine 5-triphosphate), a reaction catalyzed by the N-terminal domain. This is Bifunctional protein GlmU from Bacillus cereus (strain ZK / E33L).